The sequence spans 221 residues: Membrane protein 0 (221 aa).

Residues methionine 1–glycine 22 form a disordered region. The PPXY motif motif lies at proline 44–tyrosine 47. The chain crosses the membrane as a helical span at residues phenylalanine 100–phenylalanine 120.

It belongs to the varicellovirus ORF0 protein family. As to quaternary structure, interacts with host ITCH; this interaction probably mediates ITCH degradation.

The protein localises to the host Golgi apparatus membrane. In Homo sapiens (Human), this protein is Membrane protein 0.